A 72-amino-acid chain; its full sequence is uncharacterized protein (72 aa).

The disordered stretch occupies residues 15–62; the sequence is NNNYNNNNNNNNNNNNNNNNNNNNNNNNNNININNNNNNNNNNNNNNN.

This is an uncharacterized protein from Dictyostelium discoideum (Social amoeba).